The chain runs to 993 residues: Lateral signaling target protein 2 homolog (993 aa).

4 disordered regions span residues 340–449, 494–623, 759–813, and 825–902; these read DQRN…DTTD, DGYG…TVVQ, GARH…GDQE, and AVNE…PPAW. Over residues 343–360 the composition is skewed to low complexity; the sequence is NNNNNINNNSSSSSNSNS. Residues 372–405 show a composition bias toward polar residues; that stretch reads RSPSMLSLSTASPTPSHSIGSTFSAATSSTNPPV. The span at 409 to 448 shows a compositional bias: acidic residues; the sequence is DGDDADDDDDGDDDDEDDDDDVDDDLVGNDDSDDDDDDTT. A phosphoserine mark is found at S525 and S526. The segment covering 535-549 has biased composition (polar residues); the sequence is SHNNTTTIKSPDSDG. The segment covering 559 to 608 has biased composition (basic residues); sequence SRQRHSHHHHRHHHHHHRHSSHSSHSHHHQHQQHHSQPHPHRTTRSGRKR. A compositionally biased stretch (low complexity) spans 759-801; the sequence is GARHSAGASMQRNHTTIDNNNSTSSSPPDATITTTTTTTTTRS. A Phosphoserine modification is found at S808. Composition is skewed to low complexity over residues 842 to 862 and 884 to 896; these read SNTP…QNSP and TTAT…GTGT. Residues 905-965 form an FYVE-type zinc finger; sequence DGKAPRCMSC…VCRDCYAREI (61 aa). Residues C911, C914, C927, C930, C935, C938, C957, and C960 each contribute to the Zn(2+) site. Residues 968-993 form a disordered region; that stretch reads SGGGGGGVVQMQRQQAANRPQTASAS. The segment covering 978–993 has biased composition (polar residues); it reads MQRQQAANRPQTASAS.

Belongs to the lst-2 family.

In terms of biological role, negative regulator of epidermal growth factor receptor (EGFR) signaling. The chain is Lateral signaling target protein 2 homolog from Drosophila willistoni (Fruit fly).